A 481-amino-acid polypeptide reads, in one-letter code: MEKKKSMFVEQSFPEHEIGDTNKNFDEDGRDKRTGTWMTGSAHIITAVIGSGVLSLAWAIAQLGWVAGPAVLMAFSFITYFTSTMLADCYRSPDPVTGKRNYTYMEVVRSYLGGRKVQLCGLAQYGNLIGITIGYTITASISMVAVKRSNCFHKNGHNVKCATSNTPFMIIFAIIQIILSQIPNFHNLSWLSILAAVMSFCYASIGVGLSIAKAAGGGEHVRTTLTGVTVGIDVSGAEKIWRTFQAIGDIAFAYAYSTVLIEIQDTLKAGPPSENKAMKRASLVGVSTTTFFYMLCGCVGYAAFGNDAPGNFLTGFGFYEPFWLIDFANVCIAVHLIGAYQVFCQPIFQFVESQSAKRWPDNKFITGEYKIHVPCCGDFSINFLRLVWRTSYVVVTAVVAMIFPFFNDFLGLIGAASFWPLTVYFPIEMHIAQKKIPKFSFTWTWLKILSWTCFIVSLVAAAGSVQGLIQSLKDFKPFQAP.

The Cytoplasmic portion of the chain corresponds to 1 to 36 (MEKKKSMFVEQSFPEHEIGDTNKNFDEDGRDKRTGT). The next 2 membrane-spanning stretches (helical) occupy residues 37-57 (WMTG…LSLA) and 58-78 (WAIA…FSFI). Residues 79–125 (TYFTSTMLADCYRSPDPVTGKRNYTYMEVVRSYLGGRKVQLCGLAQY) lie on the Cytoplasmic side of the membrane. A helical membrane pass occupies residues 126 to 146 (GNLIGITIGYTITASISMVAV). The Extracellular segment spans residues 147–167 (KRSNCFHKNGHNVKCATSNTP). A helical membrane pass occupies residues 168 to 188 (FMIIFAIIQIILSQIPNFHNL). The Cytoplasmic segment spans residues 189 to 190 (SW). Residues 191–211 (LSILAAVMSFCYASIGVGLSI) traverse the membrane as a helical segment. Residues 212–242 (AKAAGGGEHVRTTLTGVTVGIDVSGAEKIWR) lie on the Extracellular side of the membrane. Residues 243–263 (TFQAIGDIAFAYAYSTVLIEI) form a helical membrane-spanning segment. Over 264–283 (QDTLKAGPPSENKAMKRASL) the chain is Cytoplasmic. The chain crosses the membrane as a helical span at residues 284–304 (VGVSTTTFFYMLCGCVGYAAF). Topologically, residues 305-321 (GNDAPGNFLTGFGFYEP) are extracellular. A helical transmembrane segment spans residues 322–342 (FWLIDFANVCIAVHLIGAYQV). The Cytoplasmic segment spans residues 343–385 (FCQPIFQFVESQSAKRWPDNKFITGEYKIHVPCCGDFSINFLR). Residues 386 to 405 (LVWRTSYVVVTAVVAMIFPF) traverse the membrane as a helical segment. Residues 406–408 (FND) lie on the Extracellular side of the membrane. A helical transmembrane segment spans residues 409–427 (FLGLIGAASFWPLTVYFPI). Over 428 to 447 (EMHIAQKKIPKFSFTWTWLK) the chain is Cytoplasmic. The helical transmembrane segment at 448–468 (ILSWTCFIVSLVAAAGSVQGL) threads the bilayer. The Extracellular portion of the chain corresponds to 469 to 481 (IQSLKDFKPFQAP).

Belongs to the amino acid/polyamine transporter 2 family. Amino acid/auxin permease (AAAP) (TC 2.A.18.2) subfamily. Expressed in roots and leaves, and at lower levels in stems and flowers. Found in the xylem parenchyma.

Its subcellular location is the cell membrane. Functionally, amino acid-proton symporter. Stereospecific transporter with a broad specificity for tryptophan, proline, and neutral and acidic amino acids. Has an affinity for aspartate in a physiological range. Involved in the uptake of amino acids diffusing out of the xylem tracheids into the xylem parenchyma. This is Amino acid permease 6 (AAP6) from Arabidopsis thaliana (Mouse-ear cress).